Reading from the N-terminus, the 500-residue chain is Cysteine-rich secretory protein LCCL domain-containing 1 (500 aa).

Positions 1-23 (MMCKAQEWLRVTALLFVARAVPA) are cleaved as a signal peptide. The 141-residue stretch at 66–206 (LDLHNKLRSQ…PKAVYLVCNY (141 aa)) folds into the SCP domain. Residues 258–281 (EIERQQSQVHDTHVRTRSDDSDRN) are disordered. LCCL domains are found at residues 289 to 384 (MSQI…ANSF) and 390 to 492 (TVQA…TGGK). Disulfide bonds link cysteine 295/cysteine 313, cysteine 317/cysteine 337, cysteine 396/cysteine 418, and cysteine 422/cysteine 445.

The protein belongs to the CRISP family.

Its subcellular location is the secreted. In Mus musculus (Mouse), this protein is Cysteine-rich secretory protein LCCL domain-containing 1 (Crispld1).